A 341-amino-acid polypeptide reads, in one-letter code: tRNA N6-adenosine threonylcarbamoyltransferase (341 aa).

Fe cation-binding residues include histidine 114 and histidine 118. Substrate-binding positions include 136 to 140 (LVSGG), aspartate 169, glycine 182, aspartate 186, and asparagine 278. Position 304 (aspartate 304) interacts with Fe cation.

Belongs to the KAE1 / TsaD family. Fe(2+) is required as a cofactor.

It is found in the cytoplasm. The catalysed reaction is L-threonylcarbamoyladenylate + adenosine(37) in tRNA = N(6)-L-threonylcarbamoyladenosine(37) in tRNA + AMP + H(+). Functionally, required for the formation of a threonylcarbamoyl group on adenosine at position 37 (t(6)A37) in tRNAs that read codons beginning with adenine. Is involved in the transfer of the threonylcarbamoyl moiety of threonylcarbamoyl-AMP (TC-AMP) to the N6 group of A37, together with TsaE and TsaB. TsaD likely plays a direct catalytic role in this reaction. The chain is tRNA N6-adenosine threonylcarbamoyltransferase from Lactococcus lactis subsp. cremoris (strain MG1363).